Reading from the N-terminus, the 487-residue chain is Vacuolar protein sorting-associated protein 30 (487 aa).

The disordered stretch occupies residues 33–129 (PQTLKKSSVP…DNPDAPMGSE (97 aa)). The span at 52–62 (QSRKSIYDRVS) shows a compositional bias: basic and acidic residues. Positions 81–94 (SSMSFVLLSESQMA) are enriched in polar residues. Residues 152 to 282 (VECTEMLVEG…DSQLLEKLQR (131 aa)) adopt a coiled-coil conformation. The segment at 283 to 480 (SNVYNDTFCI…LAHASNVTSN (198 aa)) is BARA. The segment at 456 to 481 (WTKACKLTLTCCKFLLAHASNVTSNA) is required for membrane-association, autophagic function during starvation and normal autophagosome morphology.

The protein belongs to the beclin family. In terms of assembly, component of the autophagy-specific VPS34 PI3-kinase complex I; and of the VPS34 PI3-kinase complex II.

It is found in the endosome membrane. The protein localises to the vacuole membrane. Its subcellular location is the preautophagosomal structure membrane. Its function is as follows. Required for cytoplasm to vacuole transport (Cvt), autophagy, nucleophagy, and mitophagy, as a part of the autophagy-specific VPS34 PI3-kinase complex I. This complex is essential to recruit the ATG8-phosphatidylinositol conjugate and the ATG12-ATG5 conjugate to the pre-autophagosomal structure. Also involved in endosome-to-Golgi retrograde transport as part of the VPS34 PI3-kinase complex II. Autophagy is required for proper vegetative growth, asexual/sexual reproduction, and full virulence. Autophagy is particularly involved in the biosynthesis of deoxynivalenol (DON), an important virulence determinant. In Gibberella zeae (strain ATCC MYA-4620 / CBS 123657 / FGSC 9075 / NRRL 31084 / PH-1) (Wheat head blight fungus), this protein is Vacuolar protein sorting-associated protein 30.